A 240-amino-acid polypeptide reads, in one-letter code: FAS1 domain-containing protein AN1527 (240 aa).

The N-terminal stretch at 1–24 (MRQLSTTALVLFLFFYCSISTAWS) is a signal peptide. The 149-residue stretch at 91-239 (EPTISDVLPK…GEVWVIDGVI (149 aa)) folds into the FAS1 domain.

Its subcellular location is the vacuole. This chain is FAS1 domain-containing protein AN1527, found in Emericella nidulans (strain FGSC A4 / ATCC 38163 / CBS 112.46 / NRRL 194 / M139) (Aspergillus nidulans).